The chain runs to 916 residues: Internalin J (916 aa).

Positions methionine 1–alanine 25 are cleaved as a signal peptide. 14 LRR repeats span residues threonine 94–threonine 115, glycine 116–threonine 136, asparagine 137–threonine 157, lysine 158–leucine 179, leucine 180–glutamine 200, leucine 201–threonine 221, glutamine 222–leucine 243, leucine 244–isoleucine 263, glutamine 264–threonine 284, glutamine 285–lysine 306, aspartate 316–asparagine 325, lysine 338–alanine 357, glycine 359–asparagine 368, and glutamate 380–isoleucine 402. MucBP domains follow at residues proline 506 to valine 568, isoleucine 576 to valine 638, isoleucine 646 to valine 708, alanine 717 to valine 779, and isoleucine 787 to valine 849. A disordered region spans residues proline 862–lysine 888. The LPXTG sorting signal signature appears at leucine 886–glycine 890. Threonine 889 carries the pentaglycyl murein peptidoglycan amidated threonine modification. Residues glycine 890 to lysine 916 constitute a propeptide, removed by sortase.

The protein belongs to the internalin family.

The protein localises to the secreted. It localises to the cell wall. Functionally, involved in several steps of L.monocytogenes infection, probably improves adhesin to host cells. The polypeptide is Internalin J (inlJ) (Listeria monocytogenes serotype 4b (strain F2365)).